The following is a 428-amino-acid chain: Serine--tRNA ligase (428 aa).

231-233 (TSE) contributes to the L-serine binding site. ATP is bound by residues 262-264 (RRE) and valine 278. Glutamate 285 contributes to the L-serine binding site. Residue 349 to 352 (ELTS) participates in ATP binding. Threonine 384 contributes to the L-serine binding site.

This sequence belongs to the class-II aminoacyl-tRNA synthetase family. Type-1 seryl-tRNA synthetase subfamily. Homodimer. The tRNA molecule binds across the dimer.

The protein localises to the cytoplasm. It catalyses the reaction tRNA(Ser) + L-serine + ATP = L-seryl-tRNA(Ser) + AMP + diphosphate + H(+). It carries out the reaction tRNA(Sec) + L-serine + ATP = L-seryl-tRNA(Sec) + AMP + diphosphate + H(+). It participates in aminoacyl-tRNA biosynthesis; selenocysteinyl-tRNA(Sec) biosynthesis; L-seryl-tRNA(Sec) from L-serine and tRNA(Sec): step 1/1. In terms of biological role, catalyzes the attachment of serine to tRNA(Ser). Is also able to aminoacylate tRNA(Sec) with serine, to form the misacylated tRNA L-seryl-tRNA(Sec), which will be further converted into selenocysteinyl-tRNA(Sec). The protein is Serine--tRNA ligase of Bifidobacterium longum (strain DJO10A).